Here is a 315-residue protein sequence, read N- to C-terminus: BTB/POZ domain-containing adapter for CUL3-mediated RhoA degradation protein 3 (315 aa).

Methionine 1 is subject to N-acetylmethionine. Position 23 is a phosphoserine (serine 23). Residues 32–100 enclose the BTB domain; the sequence is KYVKLNVGGA…LRDGGVPLPE (69 aa). The short motif at 239–245 is the PCNA-binding element; it reads QTKVEFP. A disordered region spans residues 269 to 294; it reads NALLEATGGAAGRSHHLDEDEERERE.

Belongs to the BACURD family. In terms of assembly, homotetramer; forms a two-fold symmetric tetramer in solution. Interacts with CUL3; interaction is direct and forms a 5:5 heterodecamer. Component of the BCR(BACURD3) E3 ubiquitin ligase complex, at least composed of CUL3, KCTD10/BACURD3 and RBX1. Interacts with DNA polymerase delta subunit 2/POLD2. Interacts with PCNA. Associated with the tectonic-like complex (also named B9 complex); however as Kctd10 has not been identified in all tectonic-like complexes purifications it is unclear whether it is really part of the complex.

It is found in the nucleus. Its pathway is protein modification; protein ubiquitination. Substrate-specific adapter of a BCR (BTB-CUL3-RBX1) E3 ubiquitin-protein ligase complex. The BCR(BACURD3) E3 ubiquitin ligase complex mediates the ubiquitination of target proteins, leading to their degradation by the proteasome. This chain is BTB/POZ domain-containing adapter for CUL3-mediated RhoA degradation protein 3 (Kctd10), found in Mus musculus (Mouse).